The following is a 545-amino-acid chain: Glucose-6-phosphate isomerase (545 aa).

The active-site Proton donor is the glutamate 351. Residues histidine 382 and lysine 510 contribute to the active site.

This sequence belongs to the GPI family.

The protein resides in the cytoplasm. It catalyses the reaction alpha-D-glucose 6-phosphate = beta-D-fructose 6-phosphate. The protein operates within carbohydrate biosynthesis; gluconeogenesis. Its pathway is carbohydrate degradation; glycolysis; D-glyceraldehyde 3-phosphate and glycerone phosphate from D-glucose: step 2/4. Its function is as follows. Catalyzes the reversible isomerization of glucose-6-phosphate to fructose-6-phosphate. The sequence is that of Glucose-6-phosphate isomerase from Shewanella amazonensis (strain ATCC BAA-1098 / SB2B).